The chain runs to 181 residues: Reverse rubrerythrin-1 (181 aa).

The Rubredoxin-like domain occupies Met1–Val35. The Fe cation site is built by Cys6, Cys9, Cys22, Cys25, Glu69, Glu102, Glu132, Glu165, and His168. The region spanning Lys52–Lys181 is the Ferritin-like diiron domain.

As to quaternary structure, homodimer. Fe(3+) serves as cofactor.

The enzyme catalyses H2O2 + NADH + H(+) = NAD(+) + 2 H2O. Functionally, functions as the terminal component of an NADH peroxidase (NADH:H(2)O(2) oxidoreductase) when using NADH:rubredoxin oxidoreductase (NROR) and rubredoxin (Rd) as electron transport intermediaries from NADH to revRbr 1. Plays an important role in the oxidative stress defense system in C.acetobutylicum, an obligate anaerobic bacterium. Also exhibits NADH oxidase (NADH:O(2) oxidoreductase) activity in vitro, which is 100-fold lesser than that of FprA1/2 using the same electron transfer components. Therefore, its predominant function is most likely as a scavenger of its preferred substrate, H(2)O(2). This chain is Reverse rubrerythrin-1 (rbr3A), found in Clostridium acetobutylicum (strain ATCC 824 / DSM 792 / JCM 1419 / IAM 19013 / LMG 5710 / NBRC 13948 / NRRL B-527 / VKM B-1787 / 2291 / W).